Reading from the N-terminus, the 493-residue chain is Glycerol kinase (493 aa).

T13 lines the ADP pocket. T13, T14, and S15 together coordinate ATP. A sn-glycerol 3-phosphate-binding site is contributed by T13. R17 serves as a coordination point for ADP. The sn-glycerol 3-phosphate site is built by R83, E84, Y135, and D244. Glycerol-binding residues include R83, E84, Y135, D244, and Q245. ADP contacts are provided by T266 and G309. ATP-binding residues include T266, G309, Q313, and G410. ADP is bound by residues G410 and N414.

This sequence belongs to the FGGY kinase family.

The enzyme catalyses glycerol + ATP = sn-glycerol 3-phosphate + ADP + H(+). It participates in polyol metabolism; glycerol degradation via glycerol kinase pathway; sn-glycerol 3-phosphate from glycerol: step 1/1. With respect to regulation, inhibited by fructose 1,6-bisphosphate (FBP). Its function is as follows. Key enzyme in the regulation of glycerol uptake and metabolism. Catalyzes the phosphorylation of glycerol to yield sn-glycerol 3-phosphate. The sequence is that of Glycerol kinase from Shewanella piezotolerans (strain WP3 / JCM 13877).